The following is a 440-amino-acid chain: Trigger factor (440 aa).

In terms of domain architecture, PPIase FKBP-type spans Lys160–Pro253.

It belongs to the FKBP-type PPIase family. Tig subfamily.

Its subcellular location is the cytoplasm. It carries out the reaction [protein]-peptidylproline (omega=180) = [protein]-peptidylproline (omega=0). Its function is as follows. Involved in protein export. Acts as a chaperone by maintaining the newly synthesized protein in an open conformation. Functions as a peptidyl-prolyl cis-trans isomerase. This is Trigger factor from Chlorobium chlorochromatii (strain CaD3).